The chain runs to 275 residues: Phosphatidylglycerol--prolipoprotein diacylglyceryl transferase (275 aa).

7 helical membrane-spanning segments follow: residues 22–42 (LSVRWYGLMYLFGFAFAMWLA), 61–81 (LLFYGFLGVILGGRVGYVLFY), 96–116 (IWTGGMSFHGGLIGVITAMIW), 125–145 (FFTVADFVAPLIPFGLGVGRI), 177–197 (SQLYQFALEGVVLFIILNLFW), 204–224 (GAISGLFLFCYGLFRFLVEFV), and 238–258 (ISMGQILSMPMIVAGALMVWA). Arg-144 contacts a 1,2-diacyl-sn-glycero-3-phospho-(1'-sn-glycerol).

Belongs to the Lgt family.

It localises to the cell inner membrane. It catalyses the reaction L-cysteinyl-[prolipoprotein] + a 1,2-diacyl-sn-glycero-3-phospho-(1'-sn-glycerol) = an S-1,2-diacyl-sn-glyceryl-L-cysteinyl-[prolipoprotein] + sn-glycerol 1-phosphate + H(+). It functions in the pathway protein modification; lipoprotein biosynthesis (diacylglyceryl transfer). Its function is as follows. Catalyzes the transfer of the diacylglyceryl group from phosphatidylglycerol to the sulfhydryl group of the N-terminal cysteine of a prolipoprotein, the first step in the formation of mature lipoproteins. This chain is Phosphatidylglycerol--prolipoprotein diacylglyceryl transferase, found in Aeromonas salmonicida (strain A449).